The following is a 206-amino-acid chain: Ribosomal RNA small subunit methyltransferase G (206 aa).

Residues Gly73, Leu78, 124 to 125 (VE), and Arg139 each bind S-adenosyl-L-methionine.

This sequence belongs to the methyltransferase superfamily. RNA methyltransferase RsmG family.

The protein resides in the cytoplasm. The catalysed reaction is guanosine(527) in 16S rRNA + S-adenosyl-L-methionine = N(7)-methylguanosine(527) in 16S rRNA + S-adenosyl-L-homocysteine. In terms of biological role, specifically methylates the N7 position of guanine in position 527 of 16S rRNA. The chain is Ribosomal RNA small subunit methyltransferase G from Idiomarina loihiensis (strain ATCC BAA-735 / DSM 15497 / L2-TR).